The sequence spans 649 residues: ATP-dependent DNA helicase Q1 (649 aa).

The Helicase ATP-binding domain occupies 100–275 (INVTMAGKEV…QKILCIEKCF (176 aa)). An ATP-binding site is contributed by 113 to 120 (MPTGGGKG). A DEVH box motif is present at residues 219–222 (DEVH). One can recognise a Helicase C-terminal domain in the interval 300 to 451 (FIEDIVKLIN…EMVSYCQNIS (152 aa)). Cysteine 453, cysteine 471, cysteine 475, and cysteine 478 together coordinate Zn(2+). 2 positions are modified to N6-acetyllysine: lysine 514 and lysine 522. Phosphoserine is present on residues serine 597 and serine 602. Residues 597–608 (SFRVESSQTCHS) are compositionally biased toward polar residues. The interval 597 to 649 (SFRVESSQTCHSEQGDKKMEEKNSGNFQKKAANMLQQSGSKNTGAKKRKIDDA) is disordered. Residues 609–619 (EQGDKKMEEKN) show a composition bias toward basic and acidic residues. Residues 630-639 (MLQQSGSKNT) are compositionally biased toward polar residues. The residue at position 634 (serine 634) is a Phosphoserine. The span at 640 to 649 (GAKKRKIDDA) shows a compositional bias: basic residues.

It belongs to the helicase family. RecQ subfamily. As to quaternary structure, may form homodimers or higher order oligomers. Interacts with EXO1. Interacts with MLH1. Interacts with PARP1. Mg(2+) serves as cofactor. It depends on Mn(2+) as a cofactor. Requires Zn(2+) as cofactor.

The protein resides in the nucleus. The catalysed reaction is Couples ATP hydrolysis with the unwinding of duplex DNA by translocating in the 3'-5' direction.. The enzyme catalyses ATP + H2O = ADP + phosphate + H(+). It catalyses the reaction dATP + H2O = dADP + phosphate + H(+). DNA helicase that plays a role in DNA damage repair and genome stability. Exhibits a magnesium- and ATP-dependent DNA-helicase activity that unwinds single- and double-stranded DNA in a 3'-5' direction. Plays a role in restoring regressed replication forks. Required to restart stalled replication forks induced by abortive topoisomerase 1 and 2 lesions. May play a role in the repair of DNA that is damaged by ultraviolet light or other mutagens. In Pongo abelii (Sumatran orangutan), this protein is ATP-dependent DNA helicase Q1 (RECQL).